The sequence spans 621 residues: MAU2 chromatid cohesion factor homolog (621 aa).

3 TPR repeats span residues 96–129 (FDTA…SQNN), 451–484 (GGFY…ANAE), and 491–524 (SCSL…ASKI).

This sequence belongs to the SCC4/mau-2 family. In terms of assembly, interacts with Nipped-B to form the cohesin loading complex.

The protein resides in the nucleus. Its subcellular location is the nucleoplasm. Functionally, required for association of the cohesin complex with chromatin during interphase. Plays a role in sister chromatid cohesion and normal progression through prometaphase. The chain is MAU2 chromatid cohesion factor homolog from Drosophila virilis (Fruit fly).